Reading from the N-terminus, the 388-residue chain is Sex-determination protein fem-3 (388 aa).

A run of 6 repeats spans residues 7–10, 110–113, 141–144, 234–237, 284–287, and 371–374.

Component of a complex containing fem-1, fem-2 and fem-3. Interacts with fem-1 and fem-2 (via N-terminus). Part of a E3 ubiquitin-protein ligase complex, at least composed of cul-2, elc-1, tra-1, fem-1, fem-2 and fem-3; mediates the ubiquitination and subsequent proteasomal degradation of tra-1. Interacts with tra-1. Interacts with sel-10. Interacts with tra-2.

Required for male development. In XO (male) animals, fem-3 directs male differentiation in all tissues. In XX (hermaphrodite) animals, it specifies the first 80 or so germ cells to be sperm. Negatively regulates male development when bound to tra-2. Together with fem-2 associates with the CBC(fem-1) E3 ubiquitin-protein ligase complex which mediates the ubiquitination and subsequent proteasomal degradation of tra-1. In Caenorhabditis elegans, this protein is Sex-determination protein fem-3 (fem-3).